Here is a 212-residue protein sequence, read N- to C-terminus: MNSRLIVTGTDTGIGKTVFSAALCHALGAVYWKPVQSGLEEETDSEIVARLAQASPQRILPEAWRLNTPASPHLSARLDGVEIRPEEMHIPATSLPLVIEGAGGLLVPLNDKTLFADLFAIWRIPAILCARAALGTINHTLLSLEAMRSRDIPVLGVAFISEANEDTETTIAHLGRVKRLGRLPLLDDLSPEKLHHSFARNFHIDDFAGVAR.

Residue 13–18 (GIGKTV) coordinates ATP. A Mg(2+)-binding site is contributed by Thr-17. Lys-33 is a catalytic residue. Ser-37 contacts substrate. Residue Glu-100 participates in Mg(2+) binding. ATP contacts are provided by residues 100 to 103 (EGAG), 160 to 161 (IS), and 184 to 186 (PLL).

Belongs to the dethiobiotin synthetase family. Homodimer. Requires Mg(2+) as cofactor.

It localises to the cytoplasm. The enzyme catalyses (7R,8S)-7,8-diammoniononanoate + CO2 + ATP = (4R,5S)-dethiobiotin + ADP + phosphate + 3 H(+). It participates in cofactor biosynthesis; biotin biosynthesis; biotin from 7,8-diaminononanoate: step 1/2. Catalyzes a mechanistically unusual reaction, the ATP-dependent insertion of CO2 between the N7 and N8 nitrogen atoms of 7,8-diaminopelargonic acid (DAPA, also called 7,8-diammoniononanoate) to form a ureido ring. In Brucella abortus (strain S19), this protein is ATP-dependent dethiobiotin synthetase BioD.